Consider the following 510-residue polypeptide: NAD(P)H-quinone oxidoreductase subunit 2 A, chloroplastic (510 aa).

13 consecutive transmembrane segments (helical) span residues 24–44 (LLLFDGSLIFPECILIFGLIL), 57–77 (IPWLYFISSTSLVMSITALLF), 99–119 (IFQFLILLCSTLCIPLSVEYI), 124–144 (MAITEFLLFVLTATLGGMFLC), 149–169 (LITIFVAPECFSLCSYLLSGY), 183–203 (YLLMGGASSSILVHGFSWLYG), 227–247 (PGISIALIFITVGIGFKLSPA), 295–315 (WHLLLEILAILSMILGNLIAI), 323–343 (MLAYSSIGQIGYVIIGIIVGD), 354–374 (YMLFYISMNLGTFACIVLFGL), 395–415 (ALSLALCLLSLGGLPPLAGFF), 418–438 (LYLFWCGWQAGLYFLVLIGLL), and 484–504 (MIVCVIASTIPGISMNPIIAI).

It belongs to the complex I subunit 2 family. In terms of assembly, NDH is composed of at least 16 different subunits, 5 of which are encoded in the nucleus.

It is found in the plastid. It localises to the chloroplast thylakoid membrane. The enzyme catalyses a plastoquinone + NADH + (n+1) H(+)(in) = a plastoquinol + NAD(+) + n H(+)(out). It catalyses the reaction a plastoquinone + NADPH + (n+1) H(+)(in) = a plastoquinol + NADP(+) + n H(+)(out). Its function is as follows. NDH shuttles electrons from NAD(P)H:plastoquinone, via FMN and iron-sulfur (Fe-S) centers, to quinones in the photosynthetic chain and possibly in a chloroplast respiratory chain. The immediate electron acceptor for the enzyme in this species is believed to be plastoquinone. Couples the redox reaction to proton translocation, and thus conserves the redox energy in a proton gradient. The polypeptide is NAD(P)H-quinone oxidoreductase subunit 2 A, chloroplastic (Panax ginseng (Korean ginseng)).